Reading from the N-terminus, the 636-residue chain is Transcription termination factor FttA (636 aa).

The segment at Glu4–Arg72 is KHa. A KHb region spans residues Lys73–Pro140. The segment at Asn181 to Pro383 is metallo-beta-lactamase N-terminus. The Zn(2+) site is built by His242, His244, Asp246, His247, His329, and Asp352. The segment at Gln384–Ser577 is beta-Casp. The interval Gly578–Lys636 is metallo-beta-lactamase C-terminus. Residue His603 coordinates Zn(2+).

It belongs to the metallo-beta-lactamase superfamily. RNA-metabolizing metallo-beta-lactamase-like family. FttA subfamily. In terms of assembly, homodimer. Interacts with RNA polymerase (RNAP), interacts with the Spt4-Spt5 complex. Requires Zn(2+) as cofactor.

Terminates transcription on the whole genome. Termination is linked to FttA-mediated RNA cleavage and does not require NTP hydrolysis. Cleaves endonucleolytically at the RNA exit channel of RNA polymerase (RNAP); the 5'-3' exonuclease activity of this protein degrades the nascent RNA released from RNAP. Functionally, terminates transcription genome-wide in M.maripaludis. Restores wild-type growth to a strain of Methanococcus maripaludis depleted for this gene at 22 degrees Celsius and prevents transcriptional read-through. Transcription termination is most effective in vivo on RNAs with more than one U4-tract in their 3'-ends. Has endonuclease activity after U-rich tracts in transcription termination sequences. The polypeptide is Transcription termination factor FttA (Lokiarchaeum sp. (strain GC14_75)).